The primary structure comprises 245 residues: Pyridoxine 5'-phosphate synthase (245 aa).

N7 provides a ligand contact to 3-amino-2-oxopropyl phosphate. Position 9–10 (9–10 (DH)) interacts with 1-deoxy-D-xylulose 5-phosphate. R18 serves as a coordination point for 3-amino-2-oxopropyl phosphate. The active-site Proton acceptor is H43. 1-deoxy-D-xylulose 5-phosphate-binding residues include R45 and H50. The active-site Proton acceptor is E70. T100 is a binding site for 1-deoxy-D-xylulose 5-phosphate. Residue H190 is the Proton donor of the active site. 3-amino-2-oxopropyl phosphate is bound by residues G191 and 212–213 (GH).

Belongs to the PNP synthase family. As to quaternary structure, homooctamer; tetramer of dimers.

The protein resides in the cytoplasm. The enzyme catalyses 3-amino-2-oxopropyl phosphate + 1-deoxy-D-xylulose 5-phosphate = pyridoxine 5'-phosphate + phosphate + 2 H2O + H(+). The protein operates within cofactor biosynthesis; pyridoxine 5'-phosphate biosynthesis; pyridoxine 5'-phosphate from D-erythrose 4-phosphate: step 5/5. Catalyzes the complicated ring closure reaction between the two acyclic compounds 1-deoxy-D-xylulose-5-phosphate (DXP) and 3-amino-2-oxopropyl phosphate (1-amino-acetone-3-phosphate or AAP) to form pyridoxine 5'-phosphate (PNP) and inorganic phosphate. This chain is Pyridoxine 5'-phosphate synthase, found in Prochlorococcus marinus (strain MIT 9303).